The chain runs to 837 residues: AdoMet-dependent rRNA methyltransferase SPB1 (837 aa).

Residues Gly-58, Trp-60, Asp-78, Asp-94, and Asp-119 each coordinate S-adenosyl-L-methionine. Lys-159 (proton acceptor) is an active-site residue. Positions 345-390 (LNEEEQIEKELRDLQEKQKQKQKREKRRKNEEKQKELTRMQMNMLT) form a coiled coil. Disordered regions lie at residues 359–381 (QEKQ…QKEL), 483–529 (FRAK…DEDD), 573–644 (TDDV…TTKE), and 779–808 (TKKQ…KGIK). Positions 372 to 381 (RKNEEKQKEL) are enriched in basic and acidic residues. The span at 518-529 (ESDDSELSDEDD) shows a compositional bias: acidic residues. Basic and acidic residues predominate over residues 593–602 (SYNEMKKEDL). Residues 603–635 (SDSSDEDSSSESDFEIVANDESDGDIDSDYDSD) show a composition bias toward acidic residues.

Belongs to the class I-like SAM-binding methyltransferase superfamily. RNA methyltransferase RlmE family. SPB1 subfamily. In terms of assembly, component of the nucleolar and nucleoplasmic pre-60S ribosomal particle.

The protein resides in the nucleus. The protein localises to the nucleolus. It catalyses the reaction a ribonucleotide in rRNA + S-adenosyl-L-methionine = a 2'-O-methylribonucleotide in rRNA + S-adenosyl-L-homocysteine + H(+). Its function is as follows. Required for proper assembly of pre-ribosomal particles during the biogenesis of the 60S ribosomal subunit. The polypeptide is AdoMet-dependent rRNA methyltransferase SPB1 (Candida glabrata (strain ATCC 2001 / BCRC 20586 / JCM 3761 / NBRC 0622 / NRRL Y-65 / CBS 138) (Yeast)).